The primary structure comprises 113 residues: Kita-kyushu lung cancer antigen 1 (113 aa).

Over 1–3 (MNF) the chain is Cytoplasmic. A helical; Signal-anchor for type II membrane protein transmembrane segment spans residues 4–21 (YLLLASSILCALIVFWKY). Residues 22-113 (RRFQRNTGEM…RGASPHRKST (92 aa)) lie on the Extracellular side of the membrane. N83 carries an N-linked (GlcNAc...) asparagine glycan.

Specifically expressed in testis. Expressed by cancer cell lines.

It localises to the cell membrane. The protein is Kita-kyushu lung cancer antigen 1 (CT83) of Homo sapiens (Human).